The following is a 102-amino-acid chain: Small ribosomal subunit protein uS17 (102 aa).

Residues 1–27 are disordered; sequence MEQTEEHTDTHTDEQDEAVDRNDRKER.

The protein belongs to the universal ribosomal protein uS17 family. As to quaternary structure, part of the 30S ribosomal subunit.

In terms of biological role, one of the primary rRNA binding proteins, it binds specifically to the 5'-end of 16S ribosomal RNA. The polypeptide is Small ribosomal subunit protein uS17 (Salinibacter ruber (strain DSM 13855 / M31)).